The primary structure comprises 214 residues: Putative F-box protein At5g15670 (214 aa).

Residues arginine 22–tyrosine 68 form the F-box domain.

The sequence is that of Putative F-box protein At5g15670 from Arabidopsis thaliana (Mouse-ear cress).